Reading from the N-terminus, the 132-residue chain is Small ribosomal subunit protein uS11 (132 aa).

The span at 1 to 16 (MAAGMKGKRSRRRKER) shows a compositional bias: basic residues. The segment at 1-20 (MAAGMKGKRSRRRKERKNVE) is disordered.

It belongs to the universal ribosomal protein uS11 family. In terms of assembly, part of the 30S ribosomal subunit. Interacts with proteins S7 and S18. Binds to IF-3.

Located on the platform of the 30S subunit, it bridges several disparate RNA helices of the 16S rRNA. Forms part of the Shine-Dalgarno cleft in the 70S ribosome. The polypeptide is Small ribosomal subunit protein uS11 (Clostridium botulinum (strain Kyoto / Type A2)).